Reading from the N-terminus, the 578-residue chain is MCGRRLLFLAAFGCLLANAFSLPATRNEEFDDGFPESEFDYEERHTREIPAQAYAPPIVYNSQSSYSPAKDQGYSAPAAPVYSPAAPSYSAPAAPSYSAPAAPSYSAPAAPSYSAPAAPSYSAPAAPSYSAPASSSYSAPAAPSYSAPAAPSYSAPAAPSYSAPASSSYSAPAAPSYSAPAAPSYSAPAAPSYSAPAAPSYSAPAAPSYSAPAAPSYSAPSAPSYSAQKTSSYSAPAAPSYHAPAAPASSYSAPAGPSYSAPAAPSYSAPSYSAPASSYSALKAPSYSAPAAPSYSAPAAPSYSSSASPSYSSPASSSYSAPAAPTYSAPKAQSYSAPAAPSYSAPAAPSYSAPASSSYSAPAAPSYSAPAAPSYSAPAAPSYSAPASSSYSAPAAPSYSAPAAPSYSAPASSSYSAPAAPSYSAPAAPSYSAPAAPSYSAPAAPSYSAPASSGYSAARAYSAGSAAPASGYSAPKTSSGYSAPASSGSPAASSYSAPASSTASSGYSAPASKSSGYARSEMDHQILGMARTAGGYGSAAPSAAYGAASLPSPPCPKNYVFSCSSVFTPAPCSQGYGY.

The N-terminal stretch at 1–21 is a signal peptide; the sequence is MCGRRLLFLAAFGCLLANAFS. The segment at 72–452 is 45 X 8 AA approximate tandem repeats of [PS]-[AS]-Y-S-A-P-A-[AS]; the sequence is QGYSAPAAPV…AAPSYSAPAS (381 aa). 2 disordered regions span residues 133–442 and 487–514; these read ASSS…YSAP and SGSPAASSYSAPASSTASSGYSAPASKS. One can recognise a VM domain in the interval 549–578; sequence SLPSPPCPKNYVFSCSSVFTPAPCSQGYGY.

In terms of assembly, interacts with Vm26Aa and Vm26Ab; forms part of a disulfide-linked network within the vitelline membrane of stage 10 egg chambers. Post-translationally, becomes part of a disulfide-linked network including other vitelline membrane proteins, including Vm26Aa and Vm26Ab, during vitelline membrane biogenesis and maturation. In terms of processing, sulfated by pip; probably involved in embryo dorsal-ventral axis determination. Sulfation by pip may occur on covalently bound glycosaminoglycans. Secreted into the perivitelline space and becomes stably incorporated into the vitelline membrane (at protein level). Expressed throughout the follicle cell layer of stage 10 egg chambers.

It is found in the secreted. It localises to the extracellular space. Its subcellular location is the extracellular matrix. Its function is as follows. Major early eggshell protein secreted by folicle cells into the perivitelline space and incorporated into the vitelline membrane. Localized sulfation by pip may be involved in embryo dorsal-ventral axis determination. This Drosophila melanogaster (Fruit fly) protein is Vitelline membrane-like protein.